The following is a 298-amino-acid chain: MQLEKMITEGSNAASAEIDRVSTLEMCRIINDEDKTVPLAVERVLPDIAAAIDVIHAQVSGGGRLIYLGAGTSGRLGILDASECPPTYGVKPGLVVGLIAGGEYAIQHAVEGAEDSREGGVNDLKNINLTAQDVVVGIAASGRTPYVIAGLEYARQLGCRTVGISCNPGSAVSTTAEFAITPIVGAEVVTGSSRMKAGTAQKLVLNMLSTGLMIKSGKVFGNLMVDVVATNEKLHVRQVNIVKNATGCNAEQAEAALIACERNCKTAIVMVLKNLDAAEAKKRLDQHGGFIRQVLDKE.

Residues 55–218 (IHAQVSGGGR…STGLMIKSGK (164 aa)) form the SIS domain. Catalysis depends on Glu-83, which acts as the Proton donor. Residue Glu-114 is part of the active site.

It belongs to the GCKR-like family. MurNAc-6-P etherase subfamily. Homodimer.

It carries out the reaction N-acetyl-D-muramate 6-phosphate + H2O = N-acetyl-D-glucosamine 6-phosphate + (R)-lactate. The protein operates within amino-sugar metabolism; 1,6-anhydro-N-acetylmuramate degradation. It participates in amino-sugar metabolism; N-acetylmuramate degradation. Its pathway is cell wall biogenesis; peptidoglycan recycling. Its function is as follows. Specifically catalyzes the cleavage of the D-lactyl ether substituent of MurNAc 6-phosphate, producing GlcNAc 6-phosphate and D-lactate. Together with AnmK, is also required for the utilization of anhydro-N-acetylmuramic acid (anhMurNAc) either imported from the medium or derived from its own cell wall murein, and thus plays a role in cell wall recycling. This chain is N-acetylmuramic acid 6-phosphate etherase, found in Shigella boydii serotype 18 (strain CDC 3083-94 / BS512).